The sequence spans 162 residues: Small ribosomal subunit protein uS5 (162 aa).

An S5 DRBM domain is found at 7-70 (EEKMILIRRT…YARRNMVEVP (64 aa)).

It belongs to the universal ribosomal protein uS5 family. Part of the 30S ribosomal subunit. Contacts proteins S4 and S8.

Functionally, with S4 and S12 plays an important role in translational accuracy. Its function is as follows. Located at the back of the 30S subunit body where it stabilizes the conformation of the head with respect to the body. The protein is Small ribosomal subunit protein uS5 (rpsE) of Thermus thermophilus (strain ATCC BAA-163 / DSM 7039 / HB27).